The sequence spans 36 residues: Photosystem I reaction center subunit VIII (36 aa).

The helical transmembrane segment at 9 to 29 (ISVPLVGLVFPAITMVLSFIY) threads the bilayer.

Belongs to the PsaI family.

It localises to the plastid. It is found in the chloroplast thylakoid membrane. May help in the organization of the PsaL subunit. This is Photosystem I reaction center subunit VIII from Huperzia lucidula (Shining clubmoss).